Reading from the N-terminus, the 129-residue chain is Ribonuclease P protein component (129 aa).

The protein belongs to the RnpA family. As to quaternary structure, consists of a catalytic RNA component (M1 or rnpB) and a protein subunit.

The enzyme catalyses Endonucleolytic cleavage of RNA, removing 5'-extranucleotides from tRNA precursor.. Its function is as follows. RNaseP catalyzes the removal of the 5'-leader sequence from pre-tRNA to produce the mature 5'-terminus. It can also cleave other RNA substrates such as 4.5S RNA. The protein component plays an auxiliary but essential role in vivo by binding to the 5'-leader sequence and broadening the substrate specificity of the ribozyme. The chain is Ribonuclease P protein component from Prochlorococcus marinus (strain MIT 9515).